A 339-amino-acid polypeptide reads, in one-letter code: Glycerol-3-phosphate dehydrogenase [NAD(P)+] (339 aa).

Serine 15, tyrosine 16, histidine 36, and lysine 110 together coordinate NADPH. Positions 110, 139, and 141 each coordinate sn-glycerol 3-phosphate. Alanine 143 contacts NADPH. Sn-glycerol 3-phosphate contacts are provided by lysine 195, aspartate 248, serine 258, arginine 259, and asparagine 260. The Proton acceptor role is filled by lysine 195. Position 259 (arginine 259) interacts with NADPH. Positions 283 and 285 each coordinate NADPH.

It belongs to the NAD-dependent glycerol-3-phosphate dehydrogenase family.

The protein localises to the cytoplasm. It carries out the reaction sn-glycerol 3-phosphate + NAD(+) = dihydroxyacetone phosphate + NADH + H(+). It catalyses the reaction sn-glycerol 3-phosphate + NADP(+) = dihydroxyacetone phosphate + NADPH + H(+). It functions in the pathway membrane lipid metabolism; glycerophospholipid metabolism. In terms of biological role, catalyzes the reduction of the glycolytic intermediate dihydroxyacetone phosphate (DHAP) to sn-glycerol 3-phosphate (G3P), the key precursor for phospholipid synthesis. The chain is Glycerol-3-phosphate dehydrogenase [NAD(P)+] from Shigella dysenteriae serotype 1 (strain Sd197).